The following is a 63-amino-acid chain: Large ribosomal subunit protein uL29 (63 aa).

This sequence belongs to the universal ribosomal protein uL29 family.

In Buchnera aphidicola subsp. Acyrthosiphon kondoi (Acyrthosiphon kondoi symbiotic bacterium), this protein is Large ribosomal subunit protein uL29 (rpmC).